The chain runs to 502 residues: Cardiolipin synthase (502 aa).

The next 3 membrane-spanning stretches (helical) occupy residues 7–27 (VAILVVIVGALLALTNGFWEG), 29–49 (LLGLFSVLMSCSVIFIALVIS), and 59–79 (IAWLAVLGSFPIVGFLFYLLF). 2 PLD phosphodiesterase domains span residues 237-264 (INFRNHRKIIVIDGGVGFVGGLNIGDEY) and 415-442 (EKGFLHSKVIVVDGELASIGTANMDMRS). Residues His242, Lys244, Asp249, His420, Lys422, and Asp427 contribute to the active site.

It belongs to the phospholipase D family. Cardiolipin synthase subfamily.

The protein resides in the cell membrane. The enzyme catalyses 2 a 1,2-diacyl-sn-glycero-3-phospho-(1'-sn-glycerol) = a cardiolipin + glycerol. Catalyzes the reversible phosphatidyl group transfer from one phosphatidylglycerol molecule to another to form cardiolipin (CL) (diphosphatidylglycerol) and glycerol. The sequence is that of Cardiolipin synthase (cls) from Geobacillus kaustophilus (strain HTA426).